A 140-amino-acid polypeptide reads, in one-letter code: Nucleoside diphosphate kinase (140 aa).

ATP contacts are provided by lysine 11, phenylalanine 59, arginine 87, threonine 93, arginine 104, and asparagine 114. Histidine 117 functions as the Pros-phosphohistidine intermediate in the catalytic mechanism.

This sequence belongs to the NDK family. Homotetramer. The cofactor is Mg(2+).

It localises to the cytoplasm. The catalysed reaction is a 2'-deoxyribonucleoside 5'-diphosphate + ATP = a 2'-deoxyribonucleoside 5'-triphosphate + ADP. The enzyme catalyses a ribonucleoside 5'-diphosphate + ATP = a ribonucleoside 5'-triphosphate + ADP. In terms of biological role, major role in the synthesis of nucleoside triphosphates other than ATP. The ATP gamma phosphate is transferred to the NDP beta phosphate via a ping-pong mechanism, using a phosphorylated active-site intermediate. The sequence is that of Nucleoside diphosphate kinase from Francisella philomiragia subsp. philomiragia (strain ATCC 25017 / CCUG 19701 / FSC 153 / O#319-036).